The chain runs to 430 residues: Glutamate-1-semialdehyde 2,1-aminomutase (430 aa).

The residue at position 265 (Lys-265) is an N6-(pyridoxal phosphate)lysine.

It belongs to the class-III pyridoxal-phosphate-dependent aminotransferase family. HemL subfamily. As to quaternary structure, homodimer. It depends on pyridoxal 5'-phosphate as a cofactor.

Its subcellular location is the cytoplasm. It catalyses the reaction (S)-4-amino-5-oxopentanoate = 5-aminolevulinate. It participates in porphyrin-containing compound metabolism; protoporphyrin-IX biosynthesis; 5-aminolevulinate from L-glutamyl-tRNA(Glu): step 2/2. The chain is Glutamate-1-semialdehyde 2,1-aminomutase from Shewanella baltica (strain OS195).